Consider the following 589-residue polypeptide: Proline--tRNA ligase (589 aa).

The protein belongs to the class-II aminoacyl-tRNA synthetase family. ProS type 1 subfamily. In terms of assembly, homodimer.

It is found in the cytoplasm. It catalyses the reaction tRNA(Pro) + L-proline + ATP = L-prolyl-tRNA(Pro) + AMP + diphosphate. In terms of biological role, catalyzes the attachment of proline to tRNA(Pro) in a two-step reaction: proline is first activated by ATP to form Pro-AMP and then transferred to the acceptor end of tRNA(Pro). As ProRS can inadvertently accommodate and process non-cognate amino acids such as alanine and cysteine, to avoid such errors it has two additional distinct editing activities against alanine. One activity is designated as 'pretransfer' editing and involves the tRNA(Pro)-independent hydrolysis of activated Ala-AMP. The other activity is designated 'posttransfer' editing and involves deacylation of mischarged Ala-tRNA(Pro). The misacylated Cys-tRNA(Pro) is not edited by ProRS. In Corynebacterium aurimucosum (strain ATCC 700975 / DSM 44827 / CIP 107346 / CN-1) (Corynebacterium nigricans), this protein is Proline--tRNA ligase.